The primary structure comprises 1617 residues: Mitogen-activated protein kinase kinae kinase bck1 (1617 aa).

Disordered stretches follow at residues 1–73 (MDGQ…SQLQ), 167–199 (GPVH…RTMP), 211–253 (SVAS…GGMS), 345–399 (RQIH…SPNL), 455–555 (DHRR…SSSY), 568–633 (KRSK…LRGK), 739–820 (GVPL…ISPE), 832–1144 (EHKR…RGDI), and 1164–1277 (DIDL…EILR). The span at 19-28 (TQPSQSHMLS) shows a compositional bias: low complexity. Residues 44 to 60 (VMPPPPPGPPPGPPPGP) show a composition bias toward pro residues. A compositionally biased stretch (polar residues) spans 220–248 (TAQNHQSQTGQTNEPTKSPSHRQNNSNTL). Polar residues predominate over residues 482-504 (KSGSPATQHATLNQGLSSSSTGD). Basic and acidic residues predominate over residues 524-533 (RYYESRKGQE). Composition is skewed to polar residues over residues 535–555 (IRPS…SSSY) and 586–596 (ESPTSPVNLRQ). 2 stretches are compositionally biased toward basic and acidic residues: residues 832 to 841 (EHKREVERKQ) and 871 to 885 (FDER…KKAD). Polar residues-rich tracts occupy residues 897–907 (PQESYTLTRIN) and 956–980 (GGKQ…PQSS). Basic and acidic residues-rich tracts occupy residues 1128–1140 (EDER…DSFA) and 1189–1198 (PENDLHKKEN). 2 stretches are compositionally biased toward polar residues: residues 1199–1208 (QPSSSYTGEM) and 1257–1272 (NQAS…NQKS). The Protein kinase domain maps to 1323 to 1596 (IIRGQLIGKG…QTLLTRHPFC (274 aa)). ATP contacts are provided by residues 1329-1337 (IGKGTYGRV) and Lys1352. The active-site Proton acceptor is Asp1453.

Belongs to the protein kinase superfamily. STE Ser/Thr protein kinase family. MAP kinase kinase subfamily.

The catalysed reaction is L-seryl-[protein] + ATP = O-phospho-L-seryl-[protein] + ADP + H(+). It catalyses the reaction L-threonyl-[protein] + ATP = O-phospho-L-threonyl-[protein] + ADP + H(+). Mitogen-activated kinase kinase kinase (MAPKKK), part of the cell wall integrity (CWI) signaling pathway composed by three protein kinases bck1, mkk2 and mpkA and responsible for the maintaining of cell-wall integrity balance. The CWI pathway also regulates the oxidative stress response, as well as the production of some secondary metabolites including pyomelanin. In Aspergillus fumigatus (strain CBS 144.89 / FGSC A1163 / CEA10) (Neosartorya fumigata), this protein is Mitogen-activated protein kinase kinae kinase bck1.